The chain runs to 757 residues: RNA-directed RNA polymerase catalytic subunit (757 aa).

Residues Gly53–Tyr82 form a disordered region. Residues Trp55–Pro64 are compositionally biased toward polar residues. Short sequence motifs (nuclear localization signal) lie at residues Arg187–Val195 and Arg203–Ser216. The interval Arg249–Glu256 is promoter-binding site. One can recognise a RdRp catalytic domain in the interval Val286–Tyr483.

The protein belongs to the influenza viruses polymerase PB1 family. In terms of assembly, influenza RNA polymerase is composed of three subunits: PB1, PB2 and PA. Interacts (via N-terminus) with PA (via C-terminus). Interacts (via C-terminus) with PB2 (via N-terminus); this interaction is essential for transcription initiation. Interacts (via C-terminus) with human PKP2 (via N-terminus); the interaction competitively inhibits the interaction between the RNA polymerase subunits PB1 and PB2. Phosphorylated by host PRKCA.

The protein resides in the host nucleus. Its subcellular location is the host cytoplasm. It carries out the reaction RNA(n) + a ribonucleoside 5'-triphosphate = RNA(n+1) + diphosphate. RNA-dependent RNA polymerase which is responsible for replication and transcription of virus RNA segments. The transcription of viral mRNAs occurs by a unique mechanism called cap-snatching. 5' methylated caps of cellular mRNAs are cleaved after 10-13 nucleotides by PA. In turn, these short capped RNAs are used as primers by PB1 for transcription of viral mRNAs. During virus replication, PB1 initiates RNA synthesis and copy vRNA into complementary RNA (cRNA) which in turn serves as a template for the production of more vRNAs. The chain is RNA-directed RNA polymerase catalytic subunit from Influenza A virus (strain A/Hickox/1940 H1N1).